Reading from the N-terminus, the 241-residue chain is Ribonuclease PH (241 aa).

Residues arginine 89 and 127–129 (GTR) contribute to the phosphate site.

Belongs to the RNase PH family. In terms of assembly, homohexameric ring arranged as a trimer of dimers.

The enzyme catalyses tRNA(n+1) + phosphate = tRNA(n) + a ribonucleoside 5'-diphosphate. Its function is as follows. Phosphorolytic 3'-5' exoribonuclease that plays an important role in tRNA 3'-end maturation. Removes nucleotide residues following the 3'-CCA terminus of tRNAs; can also add nucleotides to the ends of RNA molecules by using nucleoside diphosphates as substrates, but this may not be physiologically important. Probably plays a role in initiation of 16S rRNA degradation (leading to ribosome degradation) during starvation. This Xanthomonas oryzae pv. oryzae (strain MAFF 311018) protein is Ribonuclease PH.